A 391-amino-acid polypeptide reads, in one-letter code: Probable sugar efflux transporter (391 aa).

12 helical membrane-spanning segments follow: residues 16–36 (VFVFSLSAFIFNTTEFVPVAL), 51–71 (VGLMITAYAWVVSLGSLPLML), 82–102 (LLFLFALFIFSHILSALAWNF), 110–130 (MGIAFAHSIFWSITASLVIRV), 138–158 (QALGLLALGSSLAMILGLPLG), 170–190 (TFGVIGGVATLIMLLMWKLLP), 210–230 (PLLVGIYLLVIMVISGHFTTY), 247–267 (ITTLMLFVFGLAGVVGSFLFG), 277–297 (FIAFAMVLVICPQLLLFVFKN), 300–320 (WVIFLQIFLWGIGITSLTIAL), 338–358 (IFSGSYNVGIGSGALFGSIVI), and 361–381 (LGLEYIGFVGGALGLLALFWL).

Belongs to the major facilitator superfamily. SotB (TC 2.A.1.2) family.

The protein resides in the cell inner membrane. In terms of biological role, involved in the efflux of sugars. The physiological role may be the reduction of the intracellular concentration of toxic sugars or sugar metabolites. The polypeptide is Probable sugar efflux transporter (Helicobacter pylori (strain J99 / ATCC 700824) (Campylobacter pylori J99)).